The following is a 437-amino-acid chain: Nuclear hormone receptor family member nhr-28 (437 aa).

The segment at residues 5 to 80 (KSPCSVCGEA…VGMRKSAVQR (76 aa)) is a DNA-binding region (nuclear receptor). 2 NR C4-type zinc fingers span residues 8-28 (CSVCGEAGDGAHFGAEACRAC) and 44-68 (CRAMGTCVIQKNVRCMCRACRFTKC). The NR LBD domain occupies 115-376 (YEETGMPTLS…ETFYELVSGR (262 aa)).

Belongs to the nuclear hormone receptor family. Expressed in the pharynx, intestine and hypodermis.

It localises to the nucleus. Orphan nuclear receptor. This chain is Nuclear hormone receptor family member nhr-28 (nhr-28), found in Caenorhabditis elegans.